The sequence spans 119 residues: MLPAANRMRRSDEFARTFRRGTRRGTRRLVVHAATTDAGEPPRVGFVVSKAVGGAVVRNRVKRRLRAVLMHRVTDLLPGTLVVVRALPPSANATSAELERDVDGSLTSLGLRAKVVPAR.

This sequence belongs to the RnpA family. As to quaternary structure, consists of a catalytic RNA component (M1 or rnpB) and a protein subunit.

It catalyses the reaction Endonucleolytic cleavage of RNA, removing 5'-extranucleotides from tRNA precursor.. Functionally, RNaseP catalyzes the removal of the 5'-leader sequence from pre-tRNA to produce the mature 5'-terminus. It can also cleave other RNA substrates such as 4.5S RNA. The protein component plays an auxiliary but essential role in vivo by binding to the 5'-leader sequence and broadening the substrate specificity of the ribozyme. This chain is Ribonuclease P protein component, found in Beutenbergia cavernae (strain ATCC BAA-8 / DSM 12333 / CCUG 43141 / JCM 11478 / NBRC 16432 / NCIMB 13614 / HKI 0122).